The following is a 43-amino-acid chain: Potassium channel toxin gamma-KTx 4.7 (43 aa).

4 disulfide bridges follow: Cys5–Cys23, Cys11–Cys34, Cys20–Cys39, and Cys24–Cys41.

The protein belongs to the ergtoxin family. Gamma-KTx 4 subfamily. In terms of tissue distribution, expressed by the venom gland.

The protein localises to the secreted. Its function is as follows. Reversibly blocks Kv11/ERG potassium channels. This Centruroides limpidus (Mexican scorpion) protein is Potassium channel toxin gamma-KTx 4.7.